A 783-amino-acid polypeptide reads, in one-letter code: Endonuclease MutS2 (783 aa).

337–344 (GPNTGGKT) is a binding site for ATP. Residues 708-783 (LHLRGYRYEE…GFGVTVAELK (76 aa)) enclose the Smr domain.

It belongs to the DNA mismatch repair MutS family. MutS2 subfamily. In terms of assembly, homodimer. Binds to stalled ribosomes, contacting rRNA.

Endonuclease that is involved in the suppression of homologous recombination and thus may have a key role in the control of bacterial genetic diversity. Functionally, acts as a ribosome collision sensor, splitting the ribosome into its 2 subunits. Detects stalled/collided 70S ribosomes which it binds and splits by an ATP-hydrolysis driven conformational change. Acts upstream of the ribosome quality control system (RQC), a ribosome-associated complex that mediates the extraction of incompletely synthesized nascent chains from stalled ribosomes and their subsequent degradation. Probably generates substrates for RQC. This chain is Endonuclease MutS2, found in Staphylococcus haemolyticus (strain JCSC1435).